A 460-amino-acid chain; its full sequence is Argininosuccinate lyase (460 aa).

It belongs to the lyase 1 family. Argininosuccinate lyase subfamily.

It localises to the cytoplasm. It catalyses the reaction 2-(N(omega)-L-arginino)succinate = fumarate + L-arginine. The protein operates within amino-acid biosynthesis; L-arginine biosynthesis; L-arginine from L-ornithine and carbamoyl phosphate: step 3/3. This Desulforamulus reducens (strain ATCC BAA-1160 / DSM 100696 / MI-1) (Desulfotomaculum reducens) protein is Argininosuccinate lyase.